The chain runs to 879 residues: Valine--tRNA ligase (879 aa).

Positions 43-53 match the 'HIGH' region motif; that stretch reads PNVTGVLHMGH. The 'KMSKS' region motif lies at 534–538; it reads KMSKS. Residue Lys537 participates in ATP binding. Positions 807 to 878 form a coiled coil; that stretch reads LGNMIDVEAE…LKESIAALKK (72 aa).

The protein belongs to the class-I aminoacyl-tRNA synthetase family. ValS type 1 subfamily. As to quaternary structure, monomer.

Its subcellular location is the cytoplasm. The enzyme catalyses tRNA(Val) + L-valine + ATP = L-valyl-tRNA(Val) + AMP + diphosphate. Catalyzes the attachment of valine to tRNA(Val). As ValRS can inadvertently accommodate and process structurally similar amino acids such as threonine, to avoid such errors, it has a 'posttransfer' editing activity that hydrolyzes mischarged Thr-tRNA(Val) in a tRNA-dependent manner. The protein is Valine--tRNA ligase of Bacteroides thetaiotaomicron (strain ATCC 29148 / DSM 2079 / JCM 5827 / CCUG 10774 / NCTC 10582 / VPI-5482 / E50).